We begin with the raw amino-acid sequence, 102 residues long: Large ribosomal subunit protein uL24 (102 aa).

The protein belongs to the universal ribosomal protein uL24 family. Part of the 50S ribosomal subunit.

Functionally, one of two assembly initiator proteins, it binds directly to the 5'-end of the 23S rRNA, where it nucleates assembly of the 50S subunit. One of the proteins that surrounds the polypeptide exit tunnel on the outside of the subunit. The protein is Large ribosomal subunit protein uL24 of Macrococcus caseolyticus (strain JCSC5402) (Macrococcoides caseolyticum).